The following is a 345-amino-acid chain: Glycerol-3-phosphate dehydrogenase [NAD(P)+] (345 aa).

Residues S11, W12, H32, R33, and K106 each contribute to the NADPH site. The sn-glycerol 3-phosphate site is built by K106, G137, and S139. A141 contacts NADPH. Positions 192, 245, 255, 256, and 257 each coordinate sn-glycerol 3-phosphate. The active-site Proton acceptor is K192. R256 provides a ligand contact to NADPH. The NADPH site is built by V280 and E282.

The protein belongs to the NAD-dependent glycerol-3-phosphate dehydrogenase family.

It is found in the cytoplasm. The catalysed reaction is sn-glycerol 3-phosphate + NAD(+) = dihydroxyacetone phosphate + NADH + H(+). It carries out the reaction sn-glycerol 3-phosphate + NADP(+) = dihydroxyacetone phosphate + NADPH + H(+). The protein operates within membrane lipid metabolism; glycerophospholipid metabolism. In terms of biological role, catalyzes the reduction of the glycolytic intermediate dihydroxyacetone phosphate (DHAP) to sn-glycerol 3-phosphate (G3P), the key precursor for phospholipid synthesis. This Bacillus velezensis (strain DSM 23117 / BGSC 10A6 / LMG 26770 / FZB42) (Bacillus amyloliquefaciens subsp. plantarum) protein is Glycerol-3-phosphate dehydrogenase [NAD(P)+].